Here is a 223-residue protein sequence, read N- to C-terminus: Mating-type protein ALPHA2 (223 aa).

The segment at residues 151–213 (EFKKGKRFLK…NRRRKDKITE (63 aa)) is a DNA-binding region (homeobox; TALE-type).

The protein belongs to the TALE/M-ATYP homeobox family. Forms a heterodimer with A1.

Its subcellular location is the nucleus. Mating type proteins are sequence specific DNA-binding proteins that act as master switches in yeast differentiation by controlling gene expression in a cell type-specific fashion. Transcriptional corepressor that acts in conjunction with A1 to repress transcription of haploid-specific genes. The polypeptide is Mating-type protein ALPHA2 (HMLALPHA2) (Kluyveromyces lactis (strain ATCC 8585 / CBS 2359 / DSM 70799 / NBRC 1267 / NRRL Y-1140 / WM37) (Yeast)).